A 132-amino-acid chain; its full sequence is Phosphoribosyl-ATP pyrophosphatase (132 aa).

It belongs to the PRA-PH family.

Its subcellular location is the cytoplasm. It catalyses the reaction 1-(5-phospho-beta-D-ribosyl)-ATP + H2O = 1-(5-phospho-beta-D-ribosyl)-5'-AMP + diphosphate + H(+). It functions in the pathway amino-acid biosynthesis; L-histidine biosynthesis; L-histidine from 5-phospho-alpha-D-ribose 1-diphosphate: step 2/9. The polypeptide is Phosphoribosyl-ATP pyrophosphatase (Acidovorax sp. (strain JS42)).